The sequence spans 137 residues: Large ribosomal subunit protein eL28 (137 aa).

An N-acetylserine modification is found at serine 2. Residues lysine 58 and lysine 65 each participate in a glycyl lysine isopeptide (Lys-Gly) (interchain with G-Cter in SUMO2) cross-link. Residue serine 115 is modified to Phosphoserine.

The protein belongs to the eukaryotic ribosomal protein eL28 family. As to quaternary structure, component of the large ribosomal subunit.

Its subcellular location is the cytoplasm. In terms of biological role, component of the large ribosomal subunit. The ribosome is a large ribonucleoprotein complex responsible for the synthesis of proteins in the cell. The polypeptide is Large ribosomal subunit protein eL28 (Rpl28) (Rattus norvegicus (Rat)).